A 211-amino-acid chain; its full sequence is Holliday junction branch migration complex subunit RuvA (211 aa).

A domain I region spans residues 1 to 70; sequence MIQFLQGQVV…QDQIALFGFG (70 aa). A domain II region spans residues 71–149; that stretch reads RLAERDLFGQ…QWHKLQMGTG (79 aa). The segment at 150–158 is flexible linker; the sequence is ETDSTLPTT. Positions 158 to 211 are domain III; that stretch reads TALLEDLEMTLLALGYTQTEIQQAIAMVSQVPDVAQSEDPEVWIRQAIGWLSDH.

It belongs to the RuvA family. In terms of assembly, homotetramer. Forms an RuvA(8)-RuvB(12)-Holliday junction (HJ) complex. HJ DNA is sandwiched between 2 RuvA tetramers; dsDNA enters through RuvA and exits via RuvB. An RuvB hexamer assembles on each DNA strand where it exits the tetramer. Each RuvB hexamer is contacted by two RuvA subunits (via domain III) on 2 adjacent RuvB subunits; this complex drives branch migration. In the full resolvosome a probable DNA-RuvA(4)-RuvB(12)-RuvC(2) complex forms which resolves the HJ.

Its subcellular location is the cytoplasm. Its function is as follows. The RuvA-RuvB-RuvC complex processes Holliday junction (HJ) DNA during genetic recombination and DNA repair, while the RuvA-RuvB complex plays an important role in the rescue of blocked DNA replication forks via replication fork reversal (RFR). RuvA specifically binds to HJ cruciform DNA, conferring on it an open structure. The RuvB hexamer acts as an ATP-dependent pump, pulling dsDNA into and through the RuvAB complex. HJ branch migration allows RuvC to scan DNA until it finds its consensus sequence, where it cleaves and resolves the cruciform DNA. The chain is Holliday junction branch migration complex subunit RuvA from Synechocystis sp. (strain ATCC 27184 / PCC 6803 / Kazusa).